The following is a 245-amino-acid chain: Lactate utilization protein A 1 (245 aa).

It belongs to the LutA/YkgE family.

In terms of biological role, is involved in L-lactate degradation and allows cells to grow with lactate as the sole carbon source. The polypeptide is Lactate utilization protein A 1 (Bacillus mycoides (strain KBAB4) (Bacillus weihenstephanensis)).